Consider the following 78-residue polypeptide: Acyl carrier protein (78 aa).

The 76-residue stretch at Gln2–Val77 folds into the Carrier domain. Ser37 is modified (O-(pantetheine 4'-phosphoryl)serine).

It belongs to the acyl carrier protein (ACP) family. Post-translationally, 4'-phosphopantetheine is transferred from CoA to a specific serine of apo-ACP by AcpS. This modification is essential for activity because fatty acids are bound in thioester linkage to the sulfhydryl of the prosthetic group.

It localises to the cytoplasm. It participates in lipid metabolism; fatty acid biosynthesis. Carrier of the growing fatty acid chain in fatty acid biosynthesis. The sequence is that of Acyl carrier protein from Buchnera aphidicola subsp. Baizongia pistaciae (strain Bp).